A 506-amino-acid chain; its full sequence is ATP synthase subunit alpha, chloroplastic (506 aa).

Residue 170–177 coordinates ATP; the sequence is GDRQTGKT.

The protein belongs to the ATPase alpha/beta chains family. As to quaternary structure, F-type ATPases have 2 components, CF(1) - the catalytic core - and CF(0) - the membrane proton channel. CF(1) has five subunits: alpha(3), beta(3), gamma(1), delta(1), epsilon(1). CF(0) has four main subunits: a, b, b' and c.

The protein resides in the plastid. The protein localises to the chloroplast thylakoid membrane. The catalysed reaction is ATP + H2O + 4 H(+)(in) = ADP + phosphate + 5 H(+)(out). Functionally, produces ATP from ADP in the presence of a proton gradient across the membrane. The alpha chain is a regulatory subunit. This Euglena gracilis protein is ATP synthase subunit alpha, chloroplastic.